Here is a 181-residue protein sequence, read N- to C-terminus: Inner membrane-spanning protein YciB (181 aa).

5 helical membrane-spanning segments follow: residues 8–28 (FPII…ATAA), 53–73 (ITLI…NAIF), 76–96 (WKPT…HFFG), 121–141 (LSWA…VYNF), and 149–169 (FKLF…AFYI).

The protein belongs to the YciB family.

The protein localises to the cell inner membrane. In terms of biological role, plays a role in cell envelope biogenesis, maintenance of cell envelope integrity and membrane homeostasis. This Coxiella burnetii (strain RSA 331 / Henzerling II) protein is Inner membrane-spanning protein YciB.